Here is an 80-residue protein sequence, read N- to C-terminus: Conotoxin VnMSGL-0121 (80 aa).

An N-terminal signal peptide occupies residues 1-20 (MSGLGIMVLTLLLLVSMATS). Positions 21–44 (HQDGGGKQATQRDAINVRRRRSIT) are excised as a propeptide. Cystine bridges form between C52–C65, C56–C74, and C64–C78. Phenylalanine amide is present on F79.

It belongs to the conotoxin O3 superfamily. As to expression, expressed by the venom duct.

It localises to the secreted. This Conus ventricosus (Mediterranean cone) protein is Conotoxin VnMSGL-0121.